The chain runs to 143 residues: Hemoglobin subunit alpha (143 aa).

At S2 the chain carries N-acetylserine. In terms of domain architecture, Globin spans 2–143 (SLSDKDKSAV…VALALAEKYR (142 aa)). H60 provides a ligand contact to O2. Residue H89 coordinates heme b.

This sequence belongs to the globin family. In terms of assembly, heterotetramer of two alpha chains and two beta chains. As to expression, red blood cells.

In terms of biological role, involved in oxygen transport from gills to the various peripheral tissues. The chain is Hemoglobin subunit alpha (hba) from Pogonophryne scotti (Saddleback plunderfish).